A 100-amino-acid chain; its full sequence is Integration host factor subunit alpha (100 aa).

Positions Phe-53–Val-72 are disordered.

It belongs to the bacterial histone-like protein family. Heterodimer of an alpha and a beta chain.

This protein is one of the two subunits of integration host factor, a specific DNA-binding protein that functions in genetic recombination as well as in transcriptional and translational control. The polypeptide is Integration host factor subunit alpha (Neisseria meningitidis serogroup C (strain 053442)).